The chain runs to 53 residues: Toxin CjTL7 (53 aa).

An N-terminal signal peptide occupies residues 1–22 (MMIKVLLLLSSALVLFTPEAEG). Tryptophan 51 carries the post-translational modification Tryptophan amide.

In terms of processing, contains 4 disulfide bonds.

Its subcellular location is the secreted. The protein localises to the nematocyst. In terms of biological role, in vivo, only causes a weak change in behavior in shrimps (C.multidentata) (slight twitching of the walking legs), but no lethal effect is observed. No activity is observed when injected into fly larvae (M.domestica). The protein is Toxin CjTL7 of Epiactis japonica (Sea anemone).